Here is a 138-residue protein sequence, read N- to C-terminus: Acidic phospholipase A2 1 (138 aa).

A signal peptide spans 1–16; that stretch reads MRTLWIMAVLLVGVEG. 7 cysteine pairs are disulfide-bonded: Cys42/Cys131, Cys44/Cys60, Cys59/Cys111, Cys65/Cys138, Cys66/Cys104, Cys73/Cys97, and Cys91/Cys102. Ca(2+)-binding residues include Phe43, Gly45, and Gly47. His63 is an active-site residue. A Ca(2+)-binding site is contributed by Asp64. Asp105 is a catalytic residue.

Belongs to the phospholipase A2 family. Group II subfamily. D49 sub-subfamily. It depends on Ca(2+) as a cofactor. As to expression, expressed by the venom gland.

The protein localises to the secreted. The enzyme catalyses a 1,2-diacyl-sn-glycero-3-phosphocholine + H2O = a 1-acyl-sn-glycero-3-phosphocholine + a fatty acid + H(+). Snake venom phospholipase A2 (PLA2) that has high lipolytic activity. PLA2 catalyzes the calcium-dependent hydrolysis of the 2-acyl groups in 3-sn-phosphoglycerides. This is Acidic phospholipase A2 1 from Craspedocephalus gramineus (Bamboo pit viper).